Here is a 770-residue protein sequence, read N- to C-terminus: Molybdenum cofactor sulfurase (770 aa).

An N6-(pyridoxal phosphate)lysine modification is found at lysine 231. The active site involves cysteine 395. The MOSC domain occupies aspartate 601–glutamate 770.

Belongs to the class-V pyridoxal-phosphate-dependent aminotransferase family. MOCOS subfamily. Pyridoxal 5'-phosphate serves as cofactor.

The catalysed reaction is Mo-molybdopterin + L-cysteine + AH2 = thio-Mo-molybdopterin + L-alanine + A + H2O. Its function is as follows. Sulfurates the molybdenum cofactor. Sulfation of molybdenum is essential for xanthine dehydrogenase (XDH) and aldehyde oxidase (ADO) enzymes in which molybdenum cofactor is liganded by 1 oxygen and 1 sulfur atom in active form. This chain is Molybdenum cofactor sulfurase, found in Anopheles gambiae (African malaria mosquito).